The sequence spans 359 residues: UbiA prenyltransferase domain-containing protein 1 homolog (359 aa).

Residues 1–16 (MATSSQLLPNGNLSRN) are compositionally biased toward polar residues. The interval 1–23 (MATSSQLLPNGNLSRNGKTKTED) is disordered. 8 helical membrane passes run 67–89 (ALRP…LAYR), 98–118 (LATF…GNVV), 148–168 (VVSL…LLAV), 177–197 (LALI…GIGF), 200–220 (IALG…LFAF), 262–284 (IVTL…LLFA), 289–311 (FFIF…PQAF), and 335–355 (FFFG…PTFG).

The protein belongs to the UbiA prenyltransferase family.

Its subcellular location is the mitochondrion membrane. It participates in quinol/quinone metabolism; menaquinone biosynthesis. Prenyltransferase that mediates the formation of menaquinone-4 (MK-4), a vitamin K2 isoform, thereby acting as a mitochondrial electron carrier. Mediates the conversion of phylloquinone (PK) into MK-4, probably by cleaving the side chain of phylloquinone (PK) to release 2-methyl-1,4-naphthoquinone (menadione; K3) and then prenylating it with geranylgeranyl pyrophosphate (GGPP) to form MK-4. MK-4 acts as a membrane electron carrier downstream of a electron transport chain complex, improving mitochondrial oxygen consumption. The protein is UbiA prenyltransferase domain-containing protein 1 homolog (heix) of Drosophila melanogaster (Fruit fly).